The following is a 409-amino-acid chain: Putative competence-damage inducible protein (409 aa).

This sequence belongs to the CinA family.

This Clostridium botulinum (strain Langeland / NCTC 10281 / Type F) protein is Putative competence-damage inducible protein.